Consider the following 420-residue polypeptide: Phosphoribosylamine--glycine ligase (420 aa).

In terms of domain architecture, ATP-grasp spans 108-314 (KQIMVKYGIP…FAQNIDDILH (207 aa)). 134 to 195 (IEEQGAPIVV…EEFLAGEEFS (62 aa)) serves as a coordination point for ATP. 2 residues coordinate Mg(2+): Glu-284 and Asn-286.

It belongs to the GARS family. Mg(2+) serves as cofactor. The cofactor is Mn(2+).

The enzyme catalyses 5-phospho-beta-D-ribosylamine + glycine + ATP = N(1)-(5-phospho-beta-D-ribosyl)glycinamide + ADP + phosphate + H(+). Its pathway is purine metabolism; IMP biosynthesis via de novo pathway; N(1)-(5-phospho-D-ribosyl)glycinamide from 5-phospho-alpha-D-ribose 1-diphosphate: step 2/2. In Streptococcus suis, this protein is Phosphoribosylamine--glycine ligase.